We begin with the raw amino-acid sequence, 148 residues long: UPF0756 membrane protein NMA2160 (148 aa).

The next 4 helical transmembrane spans lie at 13–35, 50–70, 80–100, and 121–141; these read LILLGVVSNNNSITISATILLLM, HGLNLGIILLTIGVLSPLVSG, FLNFKMISAVFIGIFVAWLAG, and VIGVAFMGGIPVGPLIAAGIL.

This sequence belongs to the UPF0756 family.

It localises to the cell membrane. This is UPF0756 membrane protein NMA2160 from Neisseria meningitidis serogroup A / serotype 4A (strain DSM 15465 / Z2491).